The chain runs to 442 residues: MSLTIFISLATILFSFAEAISVDLNDTSSVDLATSLVADGLLNYYAGQHKGGTIGMFLPPAYWWEAGAAWNGLLNRYIATGNSTYNELVKTSMLYQSGEDSDYMPSNYTTSEGNDDQAFWGLTVISAAEANFSNPAADEPQWLELAQAVFNQQVTRWDTDHCNGGLRWQITEFNSGYNYKNTVSNGAFFQLAARLARFTDNDTYAEWANVAYDWSQRIGFIQEDYTVFDGSSIKDNCSSIEITQWTYNIGLYMAGAAYMYNYTNSTVWKTRVEGFANKTAKTFFFKDIMFEPVCEIALSCNYDQTSFKGFLTRFMVYTAQMAPFTAPLLEPLLISTAKAAAGACCGGYDGVTCGVQWWWNNDTWDGLYGLGEQMSALEAIQAPLLLKSLQVFKASNGGSSTGDPNAGLYTAPVSFANKNFENLRKHWMLLGFFLLVPTLVLY.

Positions 1 to 19 (MSLTIFISLATILFSFAEA) are cleaved as a signal peptide. 10 N-linked (GlcNAc...) asparagine glycosylation sites follow: Asn-25, Asn-82, Asn-107, Asn-131, Asn-201, Asn-236, Asn-261, Asn-264, Asn-277, and Asn-361.

The protein belongs to the glycosyl hydrolase 76 family.

The enzyme catalyses Random hydrolysis of (1-&gt;6)-alpha-D-mannosidic linkages in unbranched (1-&gt;6)-mannans.. The protein is Putative mannan endo-1,6-alpha-mannosidase C970.02 of Schizosaccharomyces pombe (strain 972 / ATCC 24843) (Fission yeast).